The primary structure comprises 448 residues: N-succinylarginine dihydrolase (448 aa).

Residues 19–28 (GGLSYGNVAS), N110, and 137–138 (HR) contribute to the substrate site. E174 is a catalytic residue. Residue R214 participates in substrate binding. The active site involves H250. Residues D252 and N365 each coordinate substrate. Residue C371 is the Nucleophile of the active site.

The protein belongs to the succinylarginine dihydrolase family. Homodimer.

The enzyme catalyses N(2)-succinyl-L-arginine + 2 H2O + 2 H(+) = N(2)-succinyl-L-ornithine + 2 NH4(+) + CO2. The protein operates within amino-acid degradation; L-arginine degradation via AST pathway; L-glutamate and succinate from L-arginine: step 2/5. Catalyzes the hydrolysis of N(2)-succinylarginine into N(2)-succinylornithine, ammonia and CO(2). This Pseudomonas syringae pv. tomato (strain ATCC BAA-871 / DC3000) protein is N-succinylarginine dihydrolase.